A 213-amino-acid chain; its full sequence is MSETYDFLFKFLVIGNAGTGKSCLLHQFIEKRFKDDSNHTIGVEFGSKIISVVNKFVKLQIWDTAGQERFRSVTRSYYRGAAGALLVYDITSRETYNALTNWLTDARMLASQNIVIILCGNKKDLDADREVTFLEASRFAQENELMFLETSALTGENVEEAFVQCARKILNKIESGELDPERMGSGIQYGDAALRQLRSPRRAQAESIQECGC.

GTP contacts are provided by Gly18, Thr19, Gly20, Lys21, Ser22, Cys23, Ser37, His39, and Thr40. Ser22 provides a ligand contact to Mg(2+). The Switch 1 motif lies at 39-44 (HTIGVE). 2 residues coordinate Mg(2+): Thr40 and Asp63. A Switch 2 motif is present at residues 65-74 (AGQERFRSVT). GTP-binding residues include Gly66, Asn121, Lys122, Asp124, Ala152, and Leu153. 2 S-geranylgeranyl cysteine lipidation sites follow: Cys211 and Cys213. Position 213 is a cysteine methyl ester (Cys213).

Belongs to the small GTPase superfamily. Rab family. Mg(2+) serves as cofactor.

It is found in the membrane. Its subcellular location is the cytoplasm. The protein localises to the early endosome membrane. It localises to the recycling endosome membrane. It catalyses the reaction GTP + H2O = GDP + phosphate + H(+). Its activity is regulated as follows. Regulated by guanine nucleotide exchange factors (GEFs) which promote the exchange of bound GDP for free GTP. Regulated by GTPase activating proteins (GAPs) which increase the GTP hydrolysis activity. Inhibited by GDP dissociation inhibitors (GDIs). Functionally, the small GTPases Rab are key regulators of intracellular membrane trafficking, from the formation of transport vesicles to their fusion with membranes. Rabs cycle between an inactive GDP-bound form and an active GTP-bound form that is able to recruit to membranes different sets of downstream effectors directly responsible for vesicle formation, movement, tethering and fusion. RAB4A is involved in protein transport. Also plays a role in vesicular traffic. Mediates VEGFR2 endosomal trafficking to enhance VEGFR2 signaling. Acts as a regulator of platelet alpha-granule release during activation and aggregation of platelets. The sequence is that of Ras-related protein Rab-4A (rab4a) from Danio rerio (Zebrafish).